Here is a 291-residue protein sequence, read N- to C-terminus: Putative fatty acid elongase 4 (291 aa).

A run of 3 helical transmembrane segments spans residues Ile-46 to Ile-66, Phe-79 to Ala-99, and Asn-254 to Val-274.

The protein belongs to the ELO family.

The protein localises to the membrane. It catalyses the reaction a very-long-chain acyl-CoA + malonyl-CoA + H(+) = a very-long-chain 3-oxoacyl-CoA + CO2 + CoA. It functions in the pathway lipid metabolism; fatty acid biosynthesis. Functionally, could be implicated in synthesis of very long chain fatty acids. This chain is Putative fatty acid elongase 4 (elo-4), found in Caenorhabditis elegans.